Here is a 347-residue protein sequence, read N- to C-terminus: MLSLIKLQRVFNVHQVPKAFHEDGIISGYRHPRSSATECVWSLFQLTNETLNVWTHFLPTWYFLWKLMTVLLMEDVWNEAYTWPLLVFLFSCCVYPLASSCAHTFSSMSTRARHICYFFDYGALSFYSLGSAISYSAYVFPDAWLSSSFHAYYISVAVFNTVLSTSLACYSRLGLPLLHYSHDIVERFSERQCPRMSKVLRILAFAYPYLFDNIPLFYRLFVCVGEGCTDNEANSVHVQHTLLAFLTSFLFATHLPERLAPGRFDYIGHSHQLFHVCAIIGTHFQMKAIEMDMGLRRSQLLASAPAISFNNTIGAALLCVSVSLGIICVYSLPLLYSSNPKNTANKE.

Topologically, residues 1-52 (MLSLIKLQRVFNVHQVPKAFHEDGIISGYRHPRSSATECVWSLFQLTNETLN) are cytoplasmic. A helical membrane pass occupies residues 53 to 73 (VWTHFLPTWYFLWKLMTVLLM). Topologically, residues 74–81 (EDVWNEAY) are extracellular. Residues 82 to 102 (TWPLLVFLFSCCVYPLASSCA) traverse the membrane as a helical segment. Residues 103 to 114 (HTFSSMSTRARH) lie on the Cytoplasmic side of the membrane. A helical transmembrane segment spans residues 115-135 (ICYFFDYGALSFYSLGSAISY). The Extracellular segment spans residues 136-138 (SAY). Residues 139–159 (VFPDAWLSSSFHAYYISVAVF) traverse the membrane as a helical segment. Residues 160-201 (NTVLSTSLACYSRLGLPLLHYSHDIVERFSERQCPRMSKVLR) are Cytoplasmic-facing. The chain crosses the membrane as a helical span at residues 202 to 222 (ILAFAYPYLFDNIPLFYRLFV). Topologically, residues 223-235 (CVGEGCTDNEANS) are extracellular. The helical transmembrane segment at 236 to 256 (VHVQHTLLAFLTSFLFATHLP) threads the bilayer. The Cytoplasmic segment spans residues 257–314 (ERLAPGRFDYIGHSHQLFHVCAIIGTHFQMKAIEMDMGLRRSQLLASAPAISFNNTIG). A helical membrane pass occupies residues 315–335 (AALLCVSVSLGIICVYSLPLL). Residues 336 to 347 (YSSNPKNTANKE) lie on the Extracellular side of the membrane.

It belongs to the ADIPOR family.

The protein localises to the membrane. Steroid membrane receptor. Binds progesterone. May be involved in oocyte maturation. In Danio rerio (Zebrafish), this protein is Membrane progestin receptor gamma-B.